Here is a 1039-residue protein sequence, read N- to C-terminus: Serine/threonine-protein kinase Tao (1039 aa).

The region spanning Phe-27 to Val-280 is the Protein kinase domain. Residues Ile-33–Val-41 and Lys-56 contribute to the ATP site. Asp-150 functions as the Proton acceptor in the catalytic mechanism. Disordered stretches follow at residues Ser-324–Ser-457, Gly-485–Arg-508, His-629–His-648, and Trp-677–Glu-707. Positions Ser-341–Glu-350 are enriched in polar residues. Residues Ser-359–Gln-376 show a composition bias toward low complexity. The segment covering Asn-377–Gln-387 has biased composition (basic residues). 2 stretches are compositionally biased toward low complexity: residues Gln-388–Ala-397 and Pro-413–Asn-429. A compositionally biased stretch (polar residues) spans His-444–Asn-454. Over residues Gly-485–Ala-500 the composition is skewed to gly residues. Coiled-coil stretches lie at residues Gln-631–Lys-765 and Lys-835–Ser-993. Over residues Trp-677 to Asp-693 the composition is skewed to basic and acidic residues.

Belongs to the protein kinase superfamily. STE Ser/Thr protein kinase family. STE20 subfamily. As to quaternary structure, interacts with Schip1; the interaction enhances Tao kinase activity. Requires Mg(2+) as cofactor. Post-translationally, autophosphorylated. In terms of tissue distribution, in the posterior midgut, expressed in almost all intestinal cell types including intestinal stem cells and enterocytes (at protein level). Maternally expressed, ubiquitously distributed in the egg and early embryo and enriched in the germ plasm at the posterior pole of the early embryo including the pole cells.

The protein localises to the cytoplasm. It is found in the cytoskeleton. The protein resides in the spindle. Its subcellular location is the membrane. It localises to the perikaryon. The protein localises to the cell cortex. It is found in the cell projection. The protein resides in the axon. It carries out the reaction L-seryl-[protein] + ATP = O-phospho-L-seryl-[protein] + ADP + H(+). It catalyses the reaction L-threonyl-[protein] + ATP = O-phospho-L-threonyl-[protein] + ADP + H(+). Its function is as follows. Serine/threonine-protein kinase which regulates the Hippo/SWH (Sav/Wts/Hpo) signaling pathway, a signaling pathway that plays a pivotal role in organ size control and tumor suppression by restricting proliferation and promoting apoptosis. The core of this pathway is composed of a kinase cascade wherein Hippo (hpo), in complex with its regulatory protein Salvador (sav), phosphorylates and activates Warts (wts) in complex with its regulatory protein Mats, which in turn phosphorylates and inactivates the Yorkie (yki) oncoprotein. In imaginal cells, phosphorylates and activates hpo and leads to repression of yki. In the midgut, negatively regulates the proliferation of intestinal stem cells through the Hippo/SWH pathway. Independent of the hippo/SWH pathway, regulates epithelial morphogenesis in follicle cells by promoting the endocytosis of Fas2 and reducing lateral adhesion between epithelial cells which, in turn, permits shrinking of the lateral membrane and initiates morphogenesis of the squamous epithelium. Required for the development of both the mushroom body and the ellipsoid body in the brain and may act as a negative regulator of the par-1 kinase. Negatively regulates the JNK pathway which increases sensitivity to ethanol exposure. Plays a role in the control of cell shape by negatively regulating the growth of microtubule plus-ends as they contact the actin-rich cell cortex. Required for the induction of apoptosis in pole cells by promoting expression of skl which enhances activity of the apoptosis activator hid. Induces in vitro expression of large, highly dynamic, microtubule-dependent lamellopodia-like cytoplasmic expansions which constantly probe the environment. Functionally, induces in vitro expression of actin-dependent filopodia-like cytoplasmic protrusions which firmly attach to the substrate. Antagonizes the activity of isoform D. This is Serine/threonine-protein kinase Tao from Drosophila melanogaster (Fruit fly).